Reading from the N-terminus, the 308-residue chain is Cell division protein FtsQ (308 aa).

The segment at 1–28 (MQSLSFPPNRRTPRLAPPRRETGRRDPA) is disordered. Residues 1–46 (MQSLSFPPNRRTPRLAPPRRETGRRDPAPSRWAYRAQRLWLTPMFR) are Cytoplasmic-facing. A compositionally biased stretch (basic and acidic residues) spans 18–28 (PRRETGRRDPA). Residues 47-67 (TALRVGLPIVGVLLVVALIFA) traverse the membrane as a helical segment. Residues 68-308 (SADRRAAMAG…RGIDTSGSDL (241 aa)) lie on the Periplasmic side of the membrane. In terms of domain architecture, POTRA spans 92 to 160 (FMVTLLSVDG…GLLEVRVTER (69 aa)).

It belongs to the FtsQ/DivIB family. FtsQ subfamily.

The protein localises to the cell inner membrane. Its function is as follows. Essential cell division protein. This chain is Cell division protein FtsQ, found in Cereibacter sphaeroides (strain ATCC 17023 / DSM 158 / JCM 6121 / CCUG 31486 / LMG 2827 / NBRC 12203 / NCIMB 8253 / ATH 2.4.1.) (Rhodobacter sphaeroides).